A 174-amino-acid chain; its full sequence is NADH-ubiquinone oxidoreductase chain 6 (174 aa).

4 consecutive transmembrane segments (helical) span residues 25–45 (SMGLMLLIQTFLTCLITSIYV), 48–68 (FWFSYVLFLIFLGGMLILFIY), 82–102 (FSLTLISLIIFSIFTIVFFMI), and 143–163 (LITLLLINYLFLTLLVTVKIT).

This sequence belongs to the complex I subunit 6 family.

It localises to the mitochondrion membrane. The enzyme catalyses a ubiquinone + NADH + 5 H(+)(in) = a ubiquinol + NAD(+) + 4 H(+)(out). Core subunit of the mitochondrial membrane respiratory chain NADH dehydrogenase (Complex I) that is believed to belong to the minimal assembly required for catalysis. Complex I functions in the transfer of electrons from NADH to the respiratory chain. The immediate electron acceptor for the enzyme is believed to be ubiquinone. This Anopheles albimanus (New world malaria mosquito) protein is NADH-ubiquinone oxidoreductase chain 6 (ND6).